The following is a 565-amino-acid chain: SRSF protein kinase 3 (565 aa).

Residues 1-44 form a disordered region; sequence MSANAGGSGSVDCGGSSSSSQTSCGPESSGSELTPATPAPRLLQ. Low complexity predominate over residues 10–31; that stretch reads SVDCGGSSSSSQTSCGPESSGS. Serine 49 is subject to Phosphoserine. A Protein kinase domain is found at 78–563; sequence YHVVRKLGWG…AADCLQHPWL (486 aa). ATP-binding positions include 84–92 and lysine 107; that span reads LGWGHFSTV. The active-site Proton acceptor is aspartate 211. Positions 236–253 are enriched in polar residues; sequence WQQSGAQPPSRSTVSTAP. Disordered stretches follow at residues 236-280 and 295-350; these read WQQS…KRLL and AAVQ…QTSG. Residues 262–277 show a composition bias toward basic residues; sequence SKNKRKKMRRKRKQQK. Over residues 325–350 the composition is skewed to low complexity; sequence AGPSPASSSPVPGGERSLSPSSQTSG. The residue at position 328 (serine 328) is a Phosphoserine.

This sequence belongs to the protein kinase superfamily. CMGC Ser/Thr protein kinase family. Exclusively expressed in skeletal and heart muscle.

It is found in the nucleus. The protein localises to the cytoplasm. It carries out the reaction L-seryl-[protein] + ATP = O-phospho-L-seryl-[protein] + ADP + H(+). The enzyme catalyses L-threonyl-[protein] + ATP = O-phospho-L-threonyl-[protein] + ADP + H(+). In terms of biological role, serine/arginine-rich protein-specific kinase which specifically phosphorylates its substrates at serine residues located in regions rich in arginine/serine dipeptides, known as RS domains. Phosphorylates the SR splicing factor SRSF1 and the lamin-B receptor (LBR) in vitro. Required for normal muscle development. The protein is SRSF protein kinase 3 (Srpk3) of Mus musculus (Mouse).